Consider the following 443-residue polypeptide: ATP-dependent protease ATPase subunit HslU (443 aa).

ATP is bound by residues Ile-18, 60–65, Asp-256, Glu-321, and Arg-393; that span reads GVGKTE.

This sequence belongs to the ClpX chaperone family. HslU subfamily. In terms of assembly, a double ring-shaped homohexamer of HslV is capped on each side by a ring-shaped HslU homohexamer. The assembly of the HslU/HslV complex is dependent on binding of ATP.

The protein resides in the cytoplasm. Functionally, ATPase subunit of a proteasome-like degradation complex; this subunit has chaperone activity. The binding of ATP and its subsequent hydrolysis by HslU are essential for unfolding of protein substrates subsequently hydrolyzed by HslV. HslU recognizes the N-terminal part of its protein substrates and unfolds these before they are guided to HslV for hydrolysis. This Vibrio parahaemolyticus serotype O3:K6 (strain RIMD 2210633) protein is ATP-dependent protease ATPase subunit HslU.